A 204-amino-acid chain; its full sequence is Dof zinc finger protein DOF3.1 (204 aa).

The segment at 1-25 is disordered; that stretch reads MQDPAAYYQTMMAKQQQQQQPQFAE. The Dof-type zinc-finger motif lies at 29–83; it reads LKCPRCDSPNTKFCYYNNYNLSQPRHFCKSCRRYWTKGGALRNVPVGGGSRKNAT. Residues Cys-31, Cys-34, Cys-56, and Cys-59 each contribute to the Zn(2+) site. Disordered regions lie at residues 70–128 and 182–204; these read RNVP…TRML and RTEPGNNNNNPWTDLAMNRAEKN. The span at 84 to 102 shows a compositional bias: low complexity; the sequence is KRSTSSSSSASSPSNSSQN. Over residues 106–124 the composition is skewed to basic and acidic residues; that stretch reads KNPDPDPDPRNSQKPDLDP.

Its subcellular location is the nucleus. In terms of biological role, transcription factor that binds specifically to a 5'-AA[AG]G-3' consensus core sequence. This is Dof zinc finger protein DOF3.1 (DOF3.1) from Arabidopsis thaliana (Mouse-ear cress).